Consider the following 81-residue polypeptide: Large ribosomal subunit protein bL27 (81 aa).

The segment at 1–22 (MAHKKGQGSSRNGRDSNAQRRG) is disordered.

The protein belongs to the bacterial ribosomal protein bL27 family.

The polypeptide is Large ribosomal subunit protein bL27 (Rhodopirellula baltica (strain DSM 10527 / NCIMB 13988 / SH1)).